A 310-amino-acid polypeptide reads, in one-letter code: Glutaminase (310 aa).

Substrate-binding residues include Ser67, Asn118, Glu161, Asn168, Tyr192, Tyr244, and Val262.

Belongs to the glutaminase family. As to quaternary structure, homotetramer.

The enzyme catalyses L-glutamine + H2O = L-glutamate + NH4(+). In Legionella pneumophila (strain Corby), this protein is Glutaminase.